The following is a 473-amino-acid chain: Sun domain-containing protein 1 (473 aa).

Residues 1–47 (MALRHTISPQFSNRHSPPVTRSVSRTGVHQPLDTSTPVTRRDSQPGT) form a disordered region. Over residues 7-47 (ISPQFSNRHSPPVTRSVSRTGVHQPLDTSTPVTRRDSQPGT) the composition is skewed to polar residues. Coiled-coil stretches lie at residues 163–191 (ISNL…LENV) and 204–235 (EELK…STKI). The disordered stretch occupies residues 237 to 257 (HSTPEKAPETAPTASLPPSSQ). Polar residues predominate over residues 248 to 257 (PTASLPPSSQ). The helical transmembrane segment at 262-282 (HITRRALLGVNVANSLIGASI) threads the bilayer. An SUN domain is found at 279–443 (GASIDHSCSS…YLIRVYGEPV (165 aa)). A disordered region spans residues 443–473 (VDPPKETQPMTDNGTESKLESAIVNSVSETA).

Its subcellular location is the nucleus membrane. The protein resides in the nucleus envelope. Functionally, involved in centrosome attachment to the nucleus. Required for zyg-12 localization to the nuclear envelope. Together with pot-1, it is required to anchor telomeres to the nuclear envelope in embryos. This is Sun domain-containing protein 1 from Caenorhabditis elegans.